Here is a 344-residue protein sequence, read N- to C-terminus: Serpentine receptor class H-72 (344 aa).

7 helical membrane passes run 30–50 (GLAF…FFTG), 66–86 (LSLV…SFFI), 110–132 (TVVQ…TLLF), 155–175 (WLAG…FNLA), 221–241 (SIYM…LVIV), 259–279 (YGLI…SVLI), and 292–312 (LVSI…LLVH).

This sequence belongs to the nematode receptor-like protein srh family.

It is found in the membrane. This chain is Serpentine receptor class H-72 (srh-72), found in Caenorhabditis elegans.